Here is a 304-residue protein sequence, read N- to C-terminus: Protoheme IX farnesyltransferase 2 (304 aa).

The next 9 helical transmembrane spans lie at 28–48 (VVALMLITAVVGMSLAPVVDF), 50–70 (WLQAAFGLVGIGLMAGSAAAF), 98–118 (ISVAIFSTALGVIGFVLLYAL), 122–142 (LTAWMTFLSLLGYAVVYTMYL), 150–170 (IVIAGIAGAMPPLLGWTAVTG), 176–196 (AWLLVMIIFIWTPPHFWAIAI), 223–243 (ILLYTILLTLVCILPVLVGMV), 245–265 (SVYLFSSLLLNAGFMYHAWKL), and 282–302 (IYHLLALFVALLADHYLGLFF).

The protein belongs to the UbiA prenyltransferase family. Protoheme IX farnesyltransferase subfamily.

The protein localises to the cell inner membrane. The enzyme catalyses heme b + (2E,6E)-farnesyl diphosphate + H2O = Fe(II)-heme o + diphosphate. It participates in porphyrin-containing compound metabolism; heme O biosynthesis; heme O from protoheme: step 1/1. Functionally, converts heme B (protoheme IX) to heme O by substitution of the vinyl group on carbon 2 of heme B porphyrin ring with a hydroxyethyl farnesyl side group. In Vibrio campbellii (strain ATCC BAA-1116), this protein is Protoheme IX farnesyltransferase 2.